The chain runs to 142 residues: MKTFMASPATIDRKWYVVDAEGKTLGRLASEVAKVLRGKNKAIFTPHIDTGDYVIVVNADKVKVTGKKLDQKIYYHHSDYIGGMKETTLREMMNKHPERVIEYAVKGMLPKGPLGRQMYTKLFVYAGPDHKHAAQKPETLEF.

Belongs to the universal ribosomal protein uL13 family. In terms of assembly, part of the 50S ribosomal subunit.

In terms of biological role, this protein is one of the early assembly proteins of the 50S ribosomal subunit, although it is not seen to bind rRNA by itself. It is important during the early stages of 50S assembly. This chain is Large ribosomal subunit protein uL13, found in Agathobacter rectalis (strain ATCC 33656 / DSM 3377 / JCM 17463 / KCTC 5835 / VPI 0990) (Eubacterium rectale).